Consider the following 252-residue polypeptide: tRNA pseudouridine synthase A (252 aa).

Aspartate 52 acts as the Nucleophile in catalysis. Substrate is bound at residue tyrosine 112.

It belongs to the tRNA pseudouridine synthase TruA family. As to quaternary structure, homodimer.

It catalyses the reaction uridine(38/39/40) in tRNA = pseudouridine(38/39/40) in tRNA. Its function is as follows. Formation of pseudouridine at positions 38, 39 and 40 in the anticodon stem and loop of transfer RNAs. The sequence is that of tRNA pseudouridine synthase A from Porphyromonas gingivalis (strain ATCC 33277 / DSM 20709 / CIP 103683 / JCM 12257 / NCTC 11834 / 2561).